A 215-amino-acid chain; its full sequence is 3-isopropylmalate dehydratase small subunit (215 aa).

The protein belongs to the LeuD family. LeuD type 1 subfamily. As to quaternary structure, heterodimer of LeuC and LeuD.

The enzyme catalyses (2R,3S)-3-isopropylmalate = (2S)-2-isopropylmalate. The protein operates within amino-acid biosynthesis; L-leucine biosynthesis; L-leucine from 3-methyl-2-oxobutanoate: step 2/4. Functionally, catalyzes the isomerization between 2-isopropylmalate and 3-isopropylmalate, via the formation of 2-isopropylmaleate. The sequence is that of 3-isopropylmalate dehydratase small subunit from Acinetobacter baumannii (strain AB307-0294).